Reading from the N-terminus, the 242-residue chain is Neuromodulin (242 aa).

Positions 1–242 (MLCCMRRTKQ…EEREADQEHA (242 aa)) are disordered. Residues Cys3 and Cys4 are each lipidated (S-palmitoyl cysteine). Residues 9 to 32 (KQVEKNDEDQKIEQDGIKPEDKAH) show a composition bias toward basic and acidic residues. Residues 31-60 (AHKAATKIQASFRGHITRKKLKGEKKGDAP) enclose the IQ domain. A Phosphoserine; by PHK and PKC modification is found at Ser41. Basic and acidic residues predominate over residues 66–84 (ANEKDEAAVAEGTEKKEGE). A compositionally biased stretch (low complexity) spans 85-97 (GSTPAEAAPGAGP). The residue at position 86 (Ser86) is a Phosphoserine. Residues 98-118 (KPEEKTGKAGETPSEEKKGEG) show a composition bias toward basic and acidic residues. The span at 119 to 134 (APDAATEQAAPQAPAP) shows a compositional bias: low complexity. Over residues 143–158 (ETESATKASTDNSPSS) the composition is skewed to polar residues. Ser155, Ser157, and Ser158 each carry phosphoserine. Residues 159-171 (KAEDAPAKEEPKQ) are compositionally biased toward basic and acidic residues. A compositionally biased stretch (low complexity) spans 172–204 (ADVPAAVTAAAATAPAAEDAAAMATAQPPTETA). Phosphoserine; by CK2 occurs at positions 206 and 207. The span at 209–242 (AEEKIEAVDETKPKDSARQDEGKGEEREADQEHA) shows a compositional bias: basic and acidic residues.

This sequence belongs to the neuromodulin family. As to quaternary structure, identified in a complex containing FGFR4, NCAM1, CDH2, PLCG1, FRS2, SRC, SHC1, GAP43 and CTTN. Interacts (via IQ domain) with calmodulin. Binds calmodulin with a greater affinity in the absence of Ca(2+) than in its presence. Phosphorylated. Phosphorylation of this protein by a protein kinase C is specifically correlated with certain forms of synaptic plasticity. In terms of processing, palmitoylated by ZDHHC3. Palmitoylation is regulated by ARF6 and is essential for plasma membrane association and axonal and dendritic filopodia induction. Deacylated by LYPLA2.

It is found in the cell membrane. The protein resides in the cell projection. Its subcellular location is the growth cone membrane. It localises to the synapse. The protein localises to the filopodium membrane. It is found in the perikaryon. The protein resides in the dendrite. Its subcellular location is the axon. It localises to the cytoplasm. Its function is as follows. This protein is associated with nerve growth. It is a major component of the motile 'growth cones' that form the tips of elongating axons. Plays a role in axonal and dendritic filopodia induction. This Bos taurus (Bovine) protein is Neuromodulin (GAP43).